A 192-amino-acid chain; its full sequence is Probable chorismate pyruvate-lyase (192 aa).

Positions 85, 120, and 176 each coordinate substrate.

It belongs to the UbiC family.

It is found in the cytoplasm. It carries out the reaction chorismate = 4-hydroxybenzoate + pyruvate. It functions in the pathway cofactor biosynthesis; ubiquinone biosynthesis. Functionally, removes the pyruvyl group from chorismate, with concomitant aromatization of the ring, to provide 4-hydroxybenzoate (4HB) for the ubiquinone pathway. The polypeptide is Probable chorismate pyruvate-lyase (Pseudoalteromonas atlantica (strain T6c / ATCC BAA-1087)).